The primary structure comprises 407 residues: Pleckstrin homology-like domain family A member 1 (407 aa).

Basic and acidic residues-rich tracts occupy residues 1 to 11 (MRRTPAAERLS) and 54 to 63 (RSAEDGREQP). The interval 1 to 67 (MRRTPAAERL…DGREQPAHGS (67 aa)) is disordered. The 36-residue stretch at 149-184 (SGCKALKEGVLEKRSDGLLQLWKKKCCILTEEGLLL) folds into the PH domain. Disordered stretches follow at residues 188–224 (KQVQ…EPPA) and 296–407 (QQHL…SNSA). 2 stretches are compositionally biased toward low complexity: residues 189 to 204 (QVQH…QPGQ) and 297 to 319 (QHLV…QPQI). A 15 X 2 AA repeats of P-Q region spans residues 312 to 348 (PQPQQPQIQPQPQPQIQPQPQPQPQPQPQPQQQPQPQ). Over residues 320–344 (QPQPQPQIQPQPQPQPQPQPQPQQQ) the composition is skewed to pro residues. Residues 354–381 (PHPHPHLYPHPHPHAHSHPHPHPHPHPH) are 11 X 2 AA repeats of P-H. Basic residues predominate over residues 354–384 (PHPHPHLYPHPHPHAHSHPHPHPHPHPHQLQ). The segment covering 385–395 (HAHQPLHSQPQ) has biased composition (low complexity).

In terms of assembly, interacts with RPL14, EIF3S7 and PABPC4.

It is found in the cytoplasm. It localises to the cytoplasmic vesicle. The protein resides in the nucleus. The protein localises to the nucleolus. Its function is as follows. Seems to be involved in regulation of apoptosis. May be involved in detachment-mediated programmed cell death. May mediate apoptosis during neuronal development. May be involved in regulation of anti-apoptotic effects of IGF1. May be involved in translational regulation. This Rattus norvegicus (Rat) protein is Pleckstrin homology-like domain family A member 1 (Phlda1).